A 456-amino-acid polypeptide reads, in one-letter code: MAQKPSIPKGTRDFSPEEVAKRNYIFNTIQTEFKGFGFQPIETPSFENSSTLMGKYGDEGDRLIFKILNSGDFLKKADKDALANSDSLKLTSSISEKALRYDLTVPFARYVVQHQNEIEFPFKRYQIQPVWRADRPQKGRFREFFQCDADVVGSNSLWQEVEFVQLYDAVFNKLGLEGVTIKINNRKVLSGFAEVIGEQDKLIDFTVALDKLDKIGEEGVKKEMREKGISEEALNKIQPIFNLNGNFAEKIEGLKTILEGSETGQKGIEELQFIQNAIEEMPLSVAKLDLDVTLARGLNYYTGAIFEVAAPENVKMGSIGGGGRYDDLTGIFGLKDMSGIGISFGLDRIYLVLEELGLFPATVTENTKVLFINFGEKEALYAMKAVKRLREENIIAELYPDSAKMGKQMKYADKRSIPYVVLAGEEEINDKKFTLKHMKSGEQSNLDFNGLSGALK.

This sequence belongs to the class-II aminoacyl-tRNA synthetase family. Homodimer.

The protein localises to the cytoplasm. It carries out the reaction tRNA(His) + L-histidine + ATP = L-histidyl-tRNA(His) + AMP + diphosphate + H(+). This Christiangramia forsetii (strain DSM 17595 / CGMCC 1.15422 / KT0803) (Gramella forsetii) protein is Histidine--tRNA ligase.